The primary structure comprises 428 residues: 3-phosphoshikimate 1-carboxyvinyltransferase (428 aa).

Residues Lys23, Ser24, and Arg28 each contribute to the 3-phosphoshikimate site. Residue Lys23 coordinates phosphoenolpyruvate. Residues Gly97 and Arg125 each contribute to the phosphoenolpyruvate site. 3-phosphoshikimate contacts are provided by Ser170, Ser171, Gln172, Ser198, Asp314, Asn337, and Lys341. Gln172 is a phosphoenolpyruvate binding site. Asp314 (proton acceptor) is an active-site residue. 3 residues coordinate phosphoenolpyruvate: Arg345, Arg387, and Lys412.

It belongs to the EPSP synthase family. Monomer.

It is found in the cytoplasm. The enzyme catalyses 3-phosphoshikimate + phosphoenolpyruvate = 5-O-(1-carboxyvinyl)-3-phosphoshikimate + phosphate. The protein operates within metabolic intermediate biosynthesis; chorismate biosynthesis; chorismate from D-erythrose 4-phosphate and phosphoenolpyruvate: step 6/7. In terms of biological role, catalyzes the transfer of the enolpyruvyl moiety of phosphoenolpyruvate (PEP) to the 5-hydroxyl of shikimate-3-phosphate (S3P) to produce enolpyruvyl shikimate-3-phosphate and inorganic phosphate. This chain is 3-phosphoshikimate 1-carboxyvinyltransferase, found in Hamiltonella defensa subsp. Acyrthosiphon pisum (strain 5AT).